Here is a 236-residue protein sequence, read N- to C-terminus: HTH-type transcriptional regulator SACE_5812 (236 aa).

In terms of domain architecture, HTH tetR-type spans 30–90; it reads LLTQDKIVSA…LALDAVFGEV (61 aa). Positions 53–72 form a DNA-binding region, H-T-H motif; it reads SMRKLADRLQAHATSLYWHV.

In terms of biological role, transcriptional regulator that inhibits erythromycin production. Directly represses the expression of SACE_5813, eryAI (encoding polyketide synthase I) and ermE (encoding rRNA methyltransferase), suggesting its direct regulation of the erythromycin biosynthesis gene cluster. May play an important role in regulating secondary metabolism in actinomycetes. The protein is HTH-type transcriptional regulator SACE_5812 of Saccharopolyspora erythraea (strain ATCC 11635 / DSM 40517 / JCM 4748 / NBRC 13426 / NCIMB 8594 / NRRL 2338).